Reading from the N-terminus, the 599-residue chain is 2-succinyl-5-enolpyruvyl-6-hydroxy-3-cyclohexene-1-carboxylate synthase (599 aa).

A compositionally biased stretch (low complexity) spans M1–L21. A disordered region spans residues M1–S35.

It belongs to the TPP enzyme family. MenD subfamily. As to quaternary structure, homodimer. Mg(2+) serves as cofactor. The cofactor is Mn(2+). Requires thiamine diphosphate as cofactor.

The catalysed reaction is isochorismate + 2-oxoglutarate + H(+) = 5-enolpyruvoyl-6-hydroxy-2-succinyl-cyclohex-3-ene-1-carboxylate + CO2. The protein operates within quinol/quinone metabolism; 1,4-dihydroxy-2-naphthoate biosynthesis; 1,4-dihydroxy-2-naphthoate from chorismate: step 2/7. It functions in the pathway quinol/quinone metabolism; menaquinone biosynthesis. Catalyzes the thiamine diphosphate-dependent decarboxylation of 2-oxoglutarate and the subsequent addition of the resulting succinic semialdehyde-thiamine pyrophosphate anion to isochorismate to yield 2-succinyl-5-enolpyruvyl-6-hydroxy-3-cyclohexene-1-carboxylate (SEPHCHC). The polypeptide is 2-succinyl-5-enolpyruvyl-6-hydroxy-3-cyclohexene-1-carboxylate synthase (Arthrobacter sp. (strain FB24)).